Consider the following 59-residue polypeptide: Conorfamide-Vc1 (59 aa).

The signal sequence occupies residues 1-19 (MSGRGFLLLALLLLVTVEA). Positions 20-25 (TKVEKK) are excised as a propeptide. Residues 32–39 (AWSGPRNR) form a positively charged region crucial for activity against MRGPRX1 receptors region. Residue Phe43 is modified to Phenylalanine amide. A propeptide spanning residues 45 to 59 (RRDMQSPLLSERLRL) is cleaved from the precursor.

Belongs to the FARP (FMRFamide related peptide) family. Expressed by the venom duct.

Its subcellular location is the secreted. This peptide activates human and mouse sensory neuron-specific G-protein coupled receptors MRGPRX1. The activity on human receptors has been measured (EC(50)=1.8 uM). Compared with the agonist chloroquine (anti-malaria drug), it is 200-fold more potent. The peptide also causes an increase in cytosolic calcium in a specific subset of DRG neurons, and, in contrast to other Conus venom peptides, the peptide also affects a large fraction of the non-neuronal cells. In vivo, when intracranially injected into mice, it principally renders mice unable to move, and at very low doses, it causes hyperactivity. It also induces itch sensation, since intradermal cheek injection into humanized transgenic mouse (mouse MRGPRX1 replaced by human MRGPRX1) induces scratching. In vivo, when tested at high doses (10 uM) on zebrafish larvae, it induces a range of behavioral effects ranging from an early hypoactivity during the first hour of treatment to an increase in movement during the following hours when the larvae are submitted to strobe light phases. The protein is Conorfamide-Vc1 of Conus victoriae (Queen Victoria cone).